Reading from the N-terminus, the 656-residue chain is DNA ligase (656 aa).

NAD(+)-binding positions include 32–36 and 81–82; these read DAVYD and SL. Lys112 functions as the N6-AMP-lysine intermediate in the catalytic mechanism. Residues Arg133, Glu167, and Lys306 each coordinate NAD(+). The Zn(2+) site is built by Cys400, Cys403, Cys416, and Cys421. A BRCT domain is found at 577–656; the sequence is ESSSVFSNKT…ELLKRLKEFD (80 aa).

Belongs to the NAD-dependent DNA ligase family. LigA subfamily. Mg(2+) is required as a cofactor. Mn(2+) serves as cofactor.

The catalysed reaction is NAD(+) + (deoxyribonucleotide)n-3'-hydroxyl + 5'-phospho-(deoxyribonucleotide)m = (deoxyribonucleotide)n+m + AMP + beta-nicotinamide D-nucleotide.. Functionally, DNA ligase that catalyzes the formation of phosphodiester linkages between 5'-phosphoryl and 3'-hydroxyl groups in double-stranded DNA using NAD as a coenzyme and as the energy source for the reaction. It is essential for DNA replication and repair of damaged DNA. This Helicobacter pylori (strain Shi470) protein is DNA ligase.